The sequence spans 37 residues: Large ribosomal subunit protein bL36 (37 aa).

The protein belongs to the bacterial ribosomal protein bL36 family.

The protein is Large ribosomal subunit protein bL36 of Desulfitobacterium hafniense (strain Y51).